The sequence spans 87 residues: Protein U62 (87 aa).

This sequence belongs to the herpesviridae UL91 family.

This Human herpesvirus 6B (strain Z29) (HHV-6 variant B) protein is Protein U62 (U62).